Reading from the N-terminus, the 607-residue chain is (R)-limonene synthase 1, chloroplastic (607 aa).

A chloroplast-targeting transit peptide spans 1–52 (MSSCINPSTLATSVNGFKCLPLATNRAAIRIMAKNKPVQCLVSTKYDNLTVD). The Mn(2+) site is built by Asp343 and Asp347. Asp343, Asp347, Arg485, Asp488, and Lys504 together coordinate substrate. Positions 343-347 (DDIYD) match the DDXXD motif motif. Asp488 is a binding site for Mn(2+).

The protein belongs to the terpene synthase family. Mg(2+) serves as cofactor. The cofactor is Mn(2+).

The protein resides in the plastid. It localises to the chloroplast. The catalysed reaction is (2E)-geranyl diphosphate = (4R)-limonene + diphosphate. Inhibited by 2-fluorogeranyl diphosphate (FGPP) and 2-fluoroneryl diphosphate (FNPP). In terms of biological role, catalyzes the conversion of geranyl diphosphate to (+)-(4R)-limonene. Produces exclusively the (+)-enantiomer. Can use neryl diphosphate as substrate. Has no activity with farnesyl diphosphate. The sequence is that of (R)-limonene synthase 1, chloroplastic from Citrus sinensis (Sweet orange).